Here is a 595-residue protein sequence, read N- to C-terminus: Myb-like protein D (595 aa).

Disordered stretches follow at residues 1 to 47, 55 to 74, 82 to 266, and 319 to 445; these read MQQQ…NGLV, QQYQ…DEGE, DESQ…NNRK, and VLQK…IWTQ. Residues 19 to 47 are compositionally biased toward low complexity; sequence DNYNNNNSNINTNNNNSINDYENQNNGLV. The span at 60–74 shows a compositional bias: acidic residues; sequence DQNDSFDDDSMDEGE. Composition is skewed to low complexity over residues 90–212 and 225–264; these read NNNN…ENNN and NNNN…NNNN. Positions 324 to 348 are enriched in basic residues; it reads TLNRNRSRSRSRSNSRSHSRSRSRS. 2 stretches are compositionally biased toward low complexity: residues 349-368 and 376-420; these read RSLS…YSRS and NNNN…NNNN. Basic and acidic residues predominate over residues 423–434; sequence RKSEDDNQDDGK. In terms of domain architecture, HTH myb-type spans 435 to 489; it reads KKHRKNAIWTQEEDEKMAQLYNKYGKSWKAIHSHFDDKTREQVQSHGQYLIRIGK. The segment at residues 462–485 is a DNA-binding region (H-T-H motif); it reads WKAIHSHFDDKTREQVQSHGQYLI. The segment at 494–595 is disordered; sequence HRDGRKERRK…NSSNYVNNDN (102 aa). Residues 517 to 595 show a composition bias toward low complexity; it reads QQNQQNNNNN…NSSNYVNNDN (79 aa).

The protein localises to the nucleus. This chain is Myb-like protein D (mybD), found in Dictyostelium discoideum (Social amoeba).